A 163-amino-acid chain; its full sequence is Nucleotide-binding protein HSM_1099 (163 aa).

This sequence belongs to the YajQ family.

Nucleotide-binding protein. This is Nucleotide-binding protein HSM_1099 from Histophilus somni (strain 2336) (Haemophilus somnus).